A 216-amino-acid chain; its full sequence is Probable GTP-binding protein EngB (216 aa).

Positions 26–200 (EGIEIAFAGR…RAKLDTWFAP (175 aa)) constitute an EngB-type G domain. Residues 34-41 (GRSNAGKS), 61-65 (GRTQL), 79-82 (DLPG), 146-149 (TKAD), and 179-181 (YSS) contribute to the GTP site. Residues Ser-41 and Thr-63 each contribute to the Mg(2+) site.

The protein belongs to the TRAFAC class TrmE-Era-EngA-EngB-Septin-like GTPase superfamily. EngB GTPase family. It depends on Mg(2+) as a cofactor.

Necessary for normal cell division and for the maintenance of normal septation. This is Probable GTP-binding protein EngB from Vibrio vulnificus (strain YJ016).